A 511-amino-acid polypeptide reads, in one-letter code: Phospho-2-dehydro-3-deoxyheptonate aldolase 2, chloroplastic (511 aa).

This sequence belongs to the class-II DAHP synthase family. In terms of tissue distribution, leaves, stems, tuber and roots.

Its subcellular location is the plastid. The protein localises to the chloroplast. It carries out the reaction D-erythrose 4-phosphate + phosphoenolpyruvate + H2O = 7-phospho-2-dehydro-3-deoxy-D-arabino-heptonate + phosphate. It participates in metabolic intermediate biosynthesis; chorismate biosynthesis; chorismate from D-erythrose 4-phosphate and phosphoenolpyruvate: step 1/7. In Solanum tuberosum (Potato), this protein is Phospho-2-dehydro-3-deoxyheptonate aldolase 2, chloroplastic (SHKB).